The primary structure comprises 83 residues: High-potential iron-sulfur protein (83 aa).

Residues Cys43, Cys46, Cys61, and Cys75 each coordinate [4Fe-4S] cluster.

The protein belongs to the high-potential iron-sulfur protein (HiPIP) family. Homodimer.

Specific class of high-redox-potential 4Fe-4S ferredoxins. Functions in anaerobic electron transport in most purple and in some other photosynthetic bacteria and in at least one genus (Paracoccus) of halophilic, denitrifying bacteria. The protein is High-potential iron-sulfur protein (hip) of Thermochromatium tepidum (Chromatium tepidum).